We begin with the raw amino-acid sequence, 84 residues long: Large ribosomal subunit protein bL27 (84 aa).

Residues methionine 1–alanine 27 form a disordered region.

This sequence belongs to the bacterial ribosomal protein bL27 family.

This chain is Large ribosomal subunit protein bL27, found in Chlamydia pneumoniae (Chlamydophila pneumoniae).